A 443-amino-acid polypeptide reads, in one-letter code: Probable 26S proteasome regulatory subunit 4 (443 aa).

The segment at 1 to 53 (MGQQQSGFGGRGNDRGAGDGEKKEKKKYEAPIPSRIGKKKKGSKGPDAASKLP) is disordered. Residues 12-29 (GNDRGAGDGEKKEKKKYE) are compositionally biased toward basic and acidic residues. Residue 229-236 (GCPGTGKT) coordinates ATP.

The protein belongs to the AAA ATPase family.

The protein localises to the cytoplasm. The protein resides in the nucleus. The 26S proteasome is involved in the ATP-dependent degradation of ubiquitinated proteins. The regulatory (or ATPase) complex confers ATP dependency and substrate specificity to the 26S complex. May play a role in the degradation of microtubule severing protein mei-1. The sequence is that of Probable 26S proteasome regulatory subunit 4 (rpt-2) from Caenorhabditis elegans.